A 352-amino-acid polypeptide reads, in one-letter code: Small ribosomal subunit biogenesis GTPase RsgA (352 aa).

Positions 1–11 are enriched in basic residues; sequence MTKRKLSKGQQ. The tract at residues 1–35 is disordered; that stretch reads MTKRKLSKGQQRRVQENHKKRLQSKEKKNHVELDD. Residues 13–33 show a composition bias toward basic and acidic residues; it reads RVQENHKKRLQSKEKKNHVEL. A CP-type G domain is found at 114-276; sequence YYDGIKPIAA…VIDSPGVREF (163 aa). GTP is bound by residues 162-165 and 216-224; these read NKVD and GQSGVGKSS. The Zn(2+) site is built by Cys-300, Cys-305, His-307, and Cys-313.

Belongs to the TRAFAC class YlqF/YawG GTPase family. RsgA subfamily. As to quaternary structure, monomer. Associates with 30S ribosomal subunit, binds 16S rRNA. The cofactor is Zn(2+).

Its subcellular location is the cytoplasm. Its function is as follows. One of several proteins that assist in the late maturation steps of the functional core of the 30S ribosomal subunit. Helps release RbfA from mature subunits. May play a role in the assembly of ribosomal proteins into the subunit. Circularly permuted GTPase that catalyzes slow GTP hydrolysis, GTPase activity is stimulated by the 30S ribosomal subunit. The polypeptide is Small ribosomal subunit biogenesis GTPase RsgA (Proteus mirabilis (strain HI4320)).